A 224-amino-acid polypeptide reads, in one-letter code: Putative O-methyltransferase MT1258 (224 aa).

Over residues 1 to 10 (MDGTPGHDDM) the composition is skewed to basic and acidic residues. A disordered region spans residues 1–21 (MDGTPGHDDMPGQPAPSRGES). Residues valine 51, glutamate 73, 75–76 (GT), serine 81, aspartate 99, and isoleucine 100 contribute to the S-adenosyl-L-methionine site. Aspartate 147 is a substrate binding site. Position 149 (aspartate 149) interacts with S-adenosyl-L-methionine.

It belongs to the class I-like SAM-binding methyltransferase superfamily. Cation-dependent O-methyltransferase family.

The protein is Putative O-methyltransferase MT1258 of Mycobacterium tuberculosis (strain CDC 1551 / Oshkosh).